A 306-amino-acid polypeptide reads, in one-letter code: D-alanine--D-alanine ligase B (306 aa).

Active-site residues include glutamate 15 and serine 150. The region spanning 101–303 (KLLWQGAGLP…FSQLVVRILE (203 aa)) is the ATP-grasp domain. 134 to 189 (ISSLGLPVIVKPSREGSSVGMSKVVAENALQDALRLAFQHDEEVLIEKWLSGPEFT) contacts ATP. Residues aspartate 257, glutamate 270, and asparagine 272 each contribute to the Mg(2+) site. Residue serine 281 is part of the active site.

This sequence belongs to the D-alanine--D-alanine ligase family. As to quaternary structure, monomer. Mg(2+) serves as cofactor. It depends on Mn(2+) as a cofactor.

It is found in the cytoplasm. It carries out the reaction 2 D-alanine + ATP = D-alanyl-D-alanine + ADP + phosphate + H(+). The protein operates within cell wall biogenesis; peptidoglycan biosynthesis. Cell wall formation. This is D-alanine--D-alanine ligase B from Escherichia coli O6:H1 (strain CFT073 / ATCC 700928 / UPEC).